Reading from the N-terminus, the 398-residue chain is Dual-specificity RNA methyltransferase RlmN (398 aa).

The active-site Proton acceptor is Glu-119. One can recognise a Radical SAM core domain in the interval 125 to 364; that stretch reads EADRATLCVS…TIVRKTRGDD (240 aa). Residues Cys-132 and Cys-369 are joined by a disulfide bond. Positions 139, 143, and 146 each coordinate [4Fe-4S] cluster. S-adenosyl-L-methionine is bound by residues 193-194, Ser-225, 247-249, and Asn-326; these read GE and SLH. The active-site S-methylcysteine intermediate is Cys-369.

This sequence belongs to the radical SAM superfamily. RlmN family. Requires [4Fe-4S] cluster as cofactor.

The protein localises to the cytoplasm. The catalysed reaction is adenosine(2503) in 23S rRNA + 2 reduced [2Fe-2S]-[ferredoxin] + 2 S-adenosyl-L-methionine = 2-methyladenosine(2503) in 23S rRNA + 5'-deoxyadenosine + L-methionine + 2 oxidized [2Fe-2S]-[ferredoxin] + S-adenosyl-L-homocysteine. It carries out the reaction adenosine(37) in tRNA + 2 reduced [2Fe-2S]-[ferredoxin] + 2 S-adenosyl-L-methionine = 2-methyladenosine(37) in tRNA + 5'-deoxyadenosine + L-methionine + 2 oxidized [2Fe-2S]-[ferredoxin] + S-adenosyl-L-homocysteine. Functionally, specifically methylates position 2 of adenine 2503 in 23S rRNA and position 2 of adenine 37 in tRNAs. m2A2503 modification seems to play a crucial role in the proofreading step occurring at the peptidyl transferase center and thus would serve to optimize ribosomal fidelity. This Yersinia pseudotuberculosis serotype IB (strain PB1/+) protein is Dual-specificity RNA methyltransferase RlmN.